A 136-amino-acid polypeptide reads, in one-letter code: Large ribosomal subunit protein uL16 (136 aa).

It belongs to the universal ribosomal protein uL16 family. In terms of assembly, part of the 50S ribosomal subunit.

Functionally, binds 23S rRNA and is also seen to make contacts with the A and possibly P site tRNAs. This is Large ribosomal subunit protein uL16 from Rickettsia massiliae (strain Mtu5).